We begin with the raw amino-acid sequence, 117 residues long: Fluoride-specific ion channel FluC 2 (117 aa).

2 helical membrane-spanning segments follow: residues 1–21 (MISIILVMIGGGFGAIARSAI) and 46–66 (FLIGLTIGLSISISWFPAFFV). Positions 71 and 74 each coordinate Na(+). Residues 95 to 115 (LFLNYSLLQFIIGFIACYIGY) form a helical membrane-spanning segment.

The protein belongs to the fluoride channel Fluc/FEX (TC 1.A.43) family.

It is found in the cell membrane. The enzyme catalyses fluoride(in) = fluoride(out). Na(+) is not transported, but it plays an essential structural role and its presence is essential for fluoride channel function. Functionally, fluoride-specific ion channel. Important for reducing fluoride concentration in the cell, thus reducing its toxicity. This chain is Fluoride-specific ion channel FluC 2, found in Staphylococcus aureus (strain NCTC 8325 / PS 47).